A 195-amino-acid chain; its full sequence is Group XIIB secretory phospholipase A2-like protein (195 aa).

Positions Met-1–Ala-19 are cleaved as a signal peptide. 4 residues coordinate Ca(2+): Ser-89, Tyr-91, Leu-93, and Asp-116.

Belongs to the phospholipase A2 family. The cofactor is Ca(2+).

The protein resides in the secreted. Its function is as follows. Not known; does not seem to have catalytic activity. This is Group XIIB secretory phospholipase A2-like protein (Pla2g12b) from Mus musculus (Mouse).